The primary structure comprises 1358 residues: DNA-directed RNA polymerase subunit beta (1358 aa).

It belongs to the RNA polymerase beta chain family. The RNAP catalytic core consists of 2 alpha, 1 beta, 1 beta' and 1 omega subunit. When a sigma factor is associated with the core the holoenzyme is formed, which can initiate transcription.

The catalysed reaction is RNA(n) + a ribonucleoside 5'-triphosphate = RNA(n+1) + diphosphate. Functionally, DNA-dependent RNA polymerase catalyzes the transcription of DNA into RNA using the four ribonucleoside triphosphates as substrates. In Neorickettsia sennetsu (strain ATCC VR-367 / Miyayama) (Ehrlichia sennetsu), this protein is DNA-directed RNA polymerase subunit beta.